Consider the following 536-residue polypeptide: Mannuronan C5-epimerase (536 aa).

An N-terminal signal peptide occupies residues 1–36 (MNSHASNGRSRNWPHALLESALLTSALLMASSVALA). 5 PbH1 repeats span residues 298 to 320 (TRDF…DPHD), 322 to 345 (SHGL…IISR), 347 to 369 (VDNS…VLDR), 371 to 393 (SVGN…TLYE), and 394 to 416 (SGNN…RVRN). The Proton acceptor role is filled by His319.

This sequence belongs to the D-mannuronate C5-epimerase family.

Its subcellular location is the periplasm. It carries out the reaction [(1-&gt;4)-beta-D-mannuronosyl](n) = [alginate](n). Its pathway is glycan biosynthesis; alginate biosynthesis. Functionally, catalyzes the epimerization of beta-D-mannuronate to alpha-L-guluronate during the synthesis of the linear polysaccharide alginate. In addition, is part of a periplasmic protein complex that protects alginate from degradation by AlgL by channeling the newly formed alginate polymer through a scaffold that transfers the alginate polymer through the periplasmic space to the outer membrane secretin AlgE. The protein is Mannuronan C5-epimerase (algG) of Pseudomonas syringae pv. tomato (strain ATCC BAA-871 / DC3000).